Reading from the N-terminus, the 70-residue chain is MPEDRKAAAKVEPLRKTRPCPECGKPSNREHYPFCSNRCREVDLSRWLTGSYAIPVAEDETKADYPDEEN.

Zn(2+)-binding residues include Cys20, Cys23, Cys35, and Cys39.

It belongs to the DNA gyrase inhibitor YacG family. Interacts with GyrB. It depends on Zn(2+) as a cofactor.

Inhibits all the catalytic activities of DNA gyrase by preventing its interaction with DNA. Acts by binding directly to the C-terminal domain of GyrB, which probably disrupts DNA binding by the gyrase. The polypeptide is DNA gyrase inhibitor YacG (Rhizobium etli (strain CIAT 652)).